We begin with the raw amino-acid sequence, 342 residues long: Pre-mRNA-splicing factor 18 (342 aa).

Belongs to the PRP18 family. Interacts with the spliceosome. Part of a complex containing U4/U6 snRNPs.

The protein resides in the nucleus speckle. In terms of biological role, participates in the second step of pre-mRNA splicing. This chain is Pre-mRNA-splicing factor 18 (prpf18), found in Xenopus laevis (African clawed frog).